Consider the following 234-residue polypeptide: Large ribosomal subunit protein uL1 (234 aa).

The protein belongs to the universal ribosomal protein uL1 family. In terms of assembly, part of the 50S ribosomal subunit.

Binds directly to 23S rRNA. The L1 stalk is quite mobile in the ribosome, and is involved in E site tRNA release. Functionally, protein L1 is also a translational repressor protein, it controls the translation of the L11 operon by binding to its mRNA. This Vibrio atlanticus (strain LGP32) (Vibrio splendidus (strain Mel32)) protein is Large ribosomal subunit protein uL1.